The following is a 587-amino-acid chain: 2-succinyl-5-enolpyruvyl-6-hydroxy-3-cyclohexene-1-carboxylate synthase (587 aa).

The protein belongs to the TPP enzyme family. MenD subfamily. In terms of assembly, homodimer. Mg(2+) is required as a cofactor. The cofactor is Mn(2+). Thiamine diphosphate serves as cofactor.

The catalysed reaction is isochorismate + 2-oxoglutarate + H(+) = 5-enolpyruvoyl-6-hydroxy-2-succinyl-cyclohex-3-ene-1-carboxylate + CO2. Its pathway is quinol/quinone metabolism; 1,4-dihydroxy-2-naphthoate biosynthesis; 1,4-dihydroxy-2-naphthoate from chorismate: step 2/7. It functions in the pathway cofactor biosynthesis; phylloquinone biosynthesis. Catalyzes the thiamine diphosphate-dependent decarboxylation of 2-oxoglutarate and the subsequent addition of the resulting succinic semialdehyde-thiamine pyrophosphate anion to isochorismate to yield 2-succinyl-5-enolpyruvyl-6-hydroxy-3-cyclohexene-1-carboxylate (SEPHCHC). In Prochlorococcus marinus (strain AS9601), this protein is 2-succinyl-5-enolpyruvyl-6-hydroxy-3-cyclohexene-1-carboxylate synthase.